Reading from the N-terminus, the 497-residue chain is Protein nucleotidyltransferase YdiU (497 aa).

The ATP site is built by Gly-88, Gly-90, Arg-91, Lys-110, Asp-122, Gly-123, Arg-173, and Arg-180. Asp-249 functions as the Proton acceptor in the catalytic mechanism. The Mg(2+) site is built by Asn-250 and Asp-259. Asp-259 contacts ATP. Residues 477-497 (FARYAEPPEGGGRGYRTFCGT) are disordered.

Belongs to the SELO family. Mg(2+) serves as cofactor. Requires Mn(2+) as cofactor.

It carries out the reaction L-seryl-[protein] + ATP = 3-O-(5'-adenylyl)-L-seryl-[protein] + diphosphate. It catalyses the reaction L-threonyl-[protein] + ATP = 3-O-(5'-adenylyl)-L-threonyl-[protein] + diphosphate. The catalysed reaction is L-tyrosyl-[protein] + ATP = O-(5'-adenylyl)-L-tyrosyl-[protein] + diphosphate. The enzyme catalyses L-histidyl-[protein] + UTP = N(tele)-(5'-uridylyl)-L-histidyl-[protein] + diphosphate. It carries out the reaction L-seryl-[protein] + UTP = O-(5'-uridylyl)-L-seryl-[protein] + diphosphate. It catalyses the reaction L-tyrosyl-[protein] + UTP = O-(5'-uridylyl)-L-tyrosyl-[protein] + diphosphate. Its function is as follows. Nucleotidyltransferase involved in the post-translational modification of proteins. It can catalyze the addition of adenosine monophosphate (AMP) or uridine monophosphate (UMP) to a protein, resulting in modifications known as AMPylation and UMPylation. This chain is Protein nucleotidyltransferase YdiU, found in Methylorubrum extorquens (strain PA1) (Methylobacterium extorquens).